The chain runs to 177 residues: Ribosome rescue factor SmrB (177 aa).

Positions 22-45 (SKKLRQDTIIHQPSKNFSEQQKQR) are disordered. Residues 30–41 (IIHQPSKNFSEQ) show a composition bias toward polar residues. In terms of domain architecture, Smr spans 98-173 (LDMHGMKQDE…GAGAILVLLS (76 aa)).

It belongs to the SmrB family. As to quaternary structure, associates with collided ribosomes, but not with correctly translating polysomes.

Its function is as follows. Acts as a ribosome collision sensor. Detects stalled/collided disomes (pairs of ribosomes where the leading ribosome is stalled and a second ribosome has collided with it) and endonucleolytically cleaves mRNA at the 5' boundary of the stalled ribosome. Stalled/collided disomes form a new interface (primarily via the 30S subunits) that binds SmrB. Cleaved mRNA becomes available for tmRNA ligation, leading to ribosomal subunit dissociation and rescue of stalled ribosomes. The polypeptide is Ribosome rescue factor SmrB (Aliivibrio salmonicida (strain LFI1238) (Vibrio salmonicida (strain LFI1238))).